The chain runs to 621 residues: Chaperone protein HscA homolog (621 aa).

Belongs to the heat shock protein 70 family.

Chaperone involved in the maturation of iron-sulfur cluster-containing proteins. Has a low intrinsic ATPase activity which is markedly stimulated by HscB. In Polynucleobacter asymbioticus (strain DSM 18221 / CIP 109841 / QLW-P1DMWA-1) (Polynucleobacter necessarius subsp. asymbioticus), this protein is Chaperone protein HscA homolog.